A 404-amino-acid chain; its full sequence is MAAVPELLQQQEEDRSKLRSVSVDLNVDPSLQIDIPDALSERDKVKFTVHTKTTLPTFQSPEFSVTRQHEDFVWLHDTLIETTDYAGLIIPPAPTKPDFDGPREKMQKLGEGEGSMTKEEFAKMKQELEAEYLAVFKKTVSSHEVFLQRLSSHPVLSKDRNFHVFLEYDQDLSVRRKNTKEMFGGFFKSVVKSADEVLFTGVKEVDDFFEQEKNFLINYYNRIKDSCVKADKMTRSHKNVADDYIHTAACLHSLALEEPTVIKKYLLKVAELFEKLRKVEGRVSSDEDLKLTELLRYYMLNIEAAKDLLYRRTKALIDYENSNKALDKARLKSKDVKLAEAHQQECCQKFEQLSESAKEELINFKRKRVAAFRKNLIEMSELEIKHARNNVSLLQSCIDLFKNN.

Residue Ala2 is modified to N-acetylalanine. Residues 25 to 172 (LNVDPSLQID…HVFLEYDQDL (148 aa)) enclose the PX domain. Residues 40-46 (SERDKVK), 99-105 (FDGPREK), and 113-116 (EGSM) each bind a 1,2-diacyl-sn-glycero-3-phospho-(1D-myo-inositol-4,5-bisphosphate). Residues 169–261 (DQDLSVRRKN…HSLALEEPTV (93 aa)) are interaction with DOCK1. The segment at 183–200 (FGGFFKSVVKSADEVLFT) is membrane-binding amphipathic helix. Phosphoserine is present on Ser193. In terms of domain architecture, BAR spans 202 to 404 (VKEVDDFFEQ…QSCIDLFKNN (203 aa)). Residue Lys275 is modified to N6-acetyllysine.

This sequence belongs to the sorting nexin family. As to quaternary structure, forms heterodimers with BAR domain-containing sorting nexins SNX1 and SNX2; does not homodimerize. The heterodimers are proposed to self-assemble into helical arrays on the membrane to stabilize and expand local membrane curvature underlying endosomal tubule formation. Thought to be a component of the originally described retromer complex (also called SNX-BAR retromer) which is a pentamer containing the heterotrimeric retromer cargo-selective complex (CSC), also described as vacuolar protein sorting subcomplex (VPS), and a heterodimeric membrane-deforming subcomplex formed between SNX1 or SNX2 and SNX5 or SNX6 (also called SNX-BAR subcomplex); the respective CSC and SNX-BAR subcomplexes associate with low affinity. Interacts with SNX1, SNX2, VPS26A, VPS29, VPS35, DCTN1, DOCK1, MIB1, PIP5K1C isoform 3. Interacts with HGS; increased by PIP5K1C isoform 3 kinase activity and by PtdIns(3P) and/or PtdIns(3,4)P2. (Microbial infection) Interacts with human cytomegalovirus proteins UL35 and UL35A; these interactions inhibit the ability of USP7 to form nuclear bodies.

It is found in the endosome. Its subcellular location is the early endosome. It localises to the early endosome membrane. The protein resides in the cell membrane. The protein localises to the cytoplasmic vesicle membrane. It is found in the cytoplasm. Its subcellular location is the cell projection. It localises to the phagocytic cup. The protein resides in the ruffle. Involved in several stages of intracellular trafficking. Interacts with membranes containing phosphatidylinositol 3-phosphate (PtdIns(3P)) or phosphatidylinositol 3,4-bisphosphate (PtdIns(3,4)P2). Acts in part as component of the retromer membrane-deforming SNX-BAR subcomplex. The SNX-BAR retromer mediates retrograde transport of cargo proteins from endosomes to the trans-Golgi network (TGN) and is involved in endosome-to-plasma membrane transport for cargo protein recycling. The SNX-BAR subcomplex functions to deform the donor membrane into a tubular profile called endosome-to-TGN transport carrier (ETC). Does not have in vitro vesicle-to-membrane remodeling activity. Involved in retrograde transport of lysosomal enzyme receptor IGF2R. May function as link between endosomal transport vesicles and dynactin. Plays a role in the internalization of EGFR after EGF stimulation. Involved in EGFR endosomal sorting and degradation; the function involves PIP5K1C isoform 3 and is retromer-independent. Together with PIP5K1C isoform 3 facilitates HGS interaction with ubiquitinated EGFR, which initiates EGFR sorting to intraluminal vesicles (ILVs) of the multivesicular body for subsequent lysosomal degradation. Involved in E-cadherin sorting and degradation; inhibits PIP5K1C isoform 3-mediated E-cadherin degradation. Plays a role in macropinocytosis. The protein is Sorting nexin-5 (SNX5) of Homo sapiens (Human).